Consider the following 421-residue polypeptide: Phosphoglycerate kinase (421 aa).

(2R)-3-phosphoglycerate is bound by residues valine 23, aspartate 24, phenylalanine 25, asparagine 26, glutamine 41, arginine 42, serine 65, histidine 66, glycine 68, arginine 69, leucine 124, arginine 125, histidine 172, and arginine 173. Residue glycine 216 coordinates ADP. Glycine 216 contacts CDP. Lysine 218 serves as a coordination point for AMP. Aspartate 221 is a binding site for CDP. Aspartate 221 serves as a coordination point for Mg(2+). Lysine 222 provides a ligand contact to AMP. Position 222 (lysine 222) interacts with ATP. Glycine 240 is a binding site for ADP. Glycine 240 serves as a coordination point for CDP. Positions 241 and 315 each coordinate AMP. The ATP site is built by glycine 241 and glycine 315. Residues glycine 340 and phenylalanine 345 each contribute to the CDP site. An ADP-binding site is contributed by phenylalanine 345. Glutamate 346 contacts AMP. Residues glutamate 346, aspartate 377, and threonine 378 each contribute to the ATP site. Aspartate 377 lines the Mg(2+) pocket.

This sequence belongs to the phosphoglycerate kinase family. Monomer. The cofactor is Mg(2+).

The protein localises to the cytoplasm. It localises to the mitochondrion. It carries out the reaction (2R)-3-phosphoglycerate + ATP = (2R)-3-phospho-glyceroyl phosphate + ADP. The protein operates within carbohydrate degradation; glycolysis; pyruvate from D-glyceraldehyde 3-phosphate: step 2/5. In terms of biological role, catalyzes one of the two ATP producing reactions in the glycolytic pathway via the reversible conversion of 1,3-diphosphoglycerate to 3-phosphoglycerate. Both L- and D- forms of purine and pyrimidine nucleotides can be used as substrates, but the activity is much lower on pyrimidines. Negatively regulates the biosynthesis of acetyl-CoA from pyruvate in the mitochondrion. In Emericella nidulans (strain FGSC A4 / ATCC 38163 / CBS 112.46 / NRRL 194 / M139) (Aspergillus nidulans), this protein is Phosphoglycerate kinase (pgkA).